We begin with the raw amino-acid sequence, 264 residues long: GTP cyclohydrolase FolE2 (264 aa).

It belongs to the GTP cyclohydrolase IV family.

The enzyme catalyses GTP + H2O = 7,8-dihydroneopterin 3'-triphosphate + formate + H(+). The protein operates within cofactor biosynthesis; 7,8-dihydroneopterin triphosphate biosynthesis; 7,8-dihydroneopterin triphosphate from GTP: step 1/1. Its function is as follows. Converts GTP to 7,8-dihydroneopterin triphosphate. This is GTP cyclohydrolase FolE2 from Nitratidesulfovibrio vulgaris (strain ATCC 29579 / DSM 644 / CCUG 34227 / NCIMB 8303 / VKM B-1760 / Hildenborough) (Desulfovibrio vulgaris).